We begin with the raw amino-acid sequence, 235 residues long: Peroxisomal membrane protein 11C (235 aa).

The Cytoplasmic portion of the chain corresponds to 1–91 (MSTLETTRAE…LPLVLLGKSK (91 aa)). A helical transmembrane segment spans residues 92–108 (NALLSTFLFLDQIVWLG). Residues 109 to 206 (RTGIYKDKER…LLQLAPKKVT (98 aa)) lie on the Lumenal side of the membrane. Residues 207-226 (PRVTGAFGFASSLISCYQLL) traverse the membrane as a helical segment. The Cytoplasmic segment spans residues 227-235 (PSHPKSKMV).

This sequence belongs to the peroxin-11 family. Homooligomer. Interacts with ARC5 and FIS1B on peroxisomes. As to expression, expressed in roots and developing siliques.

The protein localises to the peroxisome membrane. Functionally, involved in peroxisomal proliferation. Promotes peroxisomal duplication, aggregation or elongation without fission. The protein is Peroxisomal membrane protein 11C (PEX11C) of Arabidopsis thaliana (Mouse-ear cress).